The sequence spans 101 residues: NAD(P)H-quinone oxidoreductase subunit 4L, chloroplastic (101 aa).

The next 3 helical transmembrane spans lie at methionine 2–isoleucine 22, isoleucine 32–phenylalanine 52, and isoleucine 61–leucine 81.

The protein belongs to the complex I subunit 4L family. As to quaternary structure, NDH is composed of at least 16 different subunits, 5 of which are encoded in the nucleus.

It localises to the plastid. The protein resides in the chloroplast thylakoid membrane. It carries out the reaction a plastoquinone + NADH + (n+1) H(+)(in) = a plastoquinol + NAD(+) + n H(+)(out). The catalysed reaction is a plastoquinone + NADPH + (n+1) H(+)(in) = a plastoquinol + NADP(+) + n H(+)(out). NDH shuttles electrons from NAD(P)H:plastoquinone, via FMN and iron-sulfur (Fe-S) centers, to quinones in the photosynthetic chain and possibly in a chloroplast respiratory chain. The immediate electron acceptor for the enzyme in this species is believed to be plastoquinone. Couples the redox reaction to proton translocation, and thus conserves the redox energy in a proton gradient. This is NAD(P)H-quinone oxidoreductase subunit 4L, chloroplastic from Lolium perenne (Perennial ryegrass).